The following is a 170-amino-acid chain: Inosine/xanthosine triphosphatase (170 aa).

It belongs to the YjjX NTPase family. As to quaternary structure, homodimer. Mg(2+) is required as a cofactor. The cofactor is Mn(2+).

It catalyses the reaction XTP + H2O = XDP + phosphate + H(+). It carries out the reaction ITP + H2O = IDP + phosphate + H(+). Phosphatase that hydrolyzes non-canonical purine nucleotides such as XTP and ITP to their respective diphosphate derivatives. Probably excludes non-canonical purines from DNA/RNA precursor pool, thus preventing their incorporation into DNA/RNA and avoiding chromosomal lesions. The chain is Inosine/xanthosine triphosphatase from Aliivibrio fischeri (strain ATCC 700601 / ES114) (Vibrio fischeri).